Here is a 72-residue protein sequence, read N- to C-terminus: Metallothionein-like protein type 2 A (72 aa).

This sequence belongs to the metallothionein superfamily. Type 15 family. As to expression, leaves and roots.

Its function is as follows. Metallothioneins have a high content of cysteine residues that bind various heavy metals. This chain is Metallothionein-like protein type 2 A (MTA), found in Solanum lycopersicum (Tomato).